Here is a 286-residue protein sequence, read N- to C-terminus: MASGKEIKGKIASVQSTKKITRAMEMVAASKMRKAQERMTASKPYASRMRQVVAHLANADLEYRHVYLQEREVKNVGYIVVSSDRGLCGGLNVNLLKNVVKSAKAWEEKGAKTSYCVVGSKGMSFFKSVGGNVEANITGLGDTPHLNDLIGSIKVMLDAYESGAIDRLYIVYNEFVNTMTQSPKNIQLLPLEAGSDEELKRHWDYIYEPAPKELLDELLVRFIESQVYQGVVENNACEQAARMIAMKAASDNAGDIIRDLQLVYNKARQAAITQEISEIVGGAAAV.

It belongs to the ATPase gamma chain family. As to quaternary structure, F-type ATPases have 2 components, CF(1) - the catalytic core - and CF(0) - the membrane proton channel. CF(1) has five subunits: alpha(3), beta(3), gamma(1), delta(1), epsilon(1). CF(0) has three main subunits: a, b and c.

Its subcellular location is the cell inner membrane. Its function is as follows. Produces ATP from ADP in the presence of a proton gradient across the membrane. The gamma chain is believed to be important in regulating ATPase activity and the flow of protons through the CF(0) complex. In Alcanivorax borkumensis (strain ATCC 700651 / DSM 11573 / NCIMB 13689 / SK2), this protein is ATP synthase gamma chain.